The primary structure comprises 574 residues: Proline--tRNA ligase (574 aa).

Belongs to the class-II aminoacyl-tRNA synthetase family. ProS type 1 subfamily. In terms of assembly, homodimer.

The protein localises to the cytoplasm. The enzyme catalyses tRNA(Pro) + L-proline + ATP = L-prolyl-tRNA(Pro) + AMP + diphosphate. Functionally, catalyzes the attachment of proline to tRNA(Pro) in a two-step reaction: proline is first activated by ATP to form Pro-AMP and then transferred to the acceptor end of tRNA(Pro). As ProRS can inadvertently accommodate and process non-cognate amino acids such as alanine and cysteine, to avoid such errors it has two additional distinct editing activities against alanine. One activity is designated as 'pretransfer' editing and involves the tRNA(Pro)-independent hydrolysis of activated Ala-AMP. The other activity is designated 'posttransfer' editing and involves deacylation of mischarged Ala-tRNA(Pro). The misacylated Cys-tRNA(Pro) is not edited by ProRS. The sequence is that of Proline--tRNA ligase from Buchnera aphidicola subsp. Baizongia pistaciae (strain Bp).